A 211-amino-acid polypeptide reads, in one-letter code: Protoglabretal synthase MOI1 (211 aa).

Transmembrane regions (helical) follow at residues Ala16–Ile36, Leu50–Phe70, Val104–Tyr124, Ile135–Ala155, and Ile179–Cys199. Residues Ile46–Ala188 enclose the EXPERA domain.

Belongs to the EBP family. As to expression, expressed in maturing fruits and in juice vesicles.

The protein localises to the membrane. It carries out the reaction 7,8-epoxymelianol = protoglabretal. It participates in secondary metabolite biosynthesis; terpenoid biosynthesis. Isomerase involved in the biosynthesis of glabretanes triterpene natural products such as glabretal, a component with in vitro antiproliferative properties on lymphocytes. Catalyzes the conversion of 7,8-epoxymelianol to protoglabretal via skeletal rearrangements. The chain is Protoglabretal synthase MOI1 from Citrus sinensis (Sweet orange).